A 95-amino-acid chain; its full sequence is Large ribosomal subunit protein bL25 (95 aa).

The protein belongs to the bacterial ribosomal protein bL25 family. As to quaternary structure, part of the 50S ribosomal subunit; part of the 5S rRNA/L5/L18/L25 subcomplex. Contacts the 5S rRNA. Binds to the 5S rRNA independently of L5 and L18.

Functionally, this is one of the proteins that binds to the 5S RNA in the ribosome where it forms part of the central protuberance. The protein is Large ribosomal subunit protein bL25 of Shewanella sediminis (strain HAW-EB3).